A 352-amino-acid chain; its full sequence is Glycerol-1-phosphate dehydrogenase [NAD(P)+] (352 aa).

NAD(+)-binding positions include 98-102 and 120-123; these read GKAID and TAAS. A substrate-binding site is contributed by Asp125. Ser129 serves as a coordination point for NAD(+). Asp172 contacts substrate. Asp172 and His252 together coordinate Zn(2+). Residue His256 coordinates substrate. His268 contacts Zn(2+).

The protein belongs to the glycerol-1-phosphate dehydrogenase family. Requires Zn(2+) as cofactor.

The protein localises to the cytoplasm. The enzyme catalyses sn-glycerol 1-phosphate + NAD(+) = dihydroxyacetone phosphate + NADH + H(+). It catalyses the reaction sn-glycerol 1-phosphate + NADP(+) = dihydroxyacetone phosphate + NADPH + H(+). Its pathway is membrane lipid metabolism; glycerophospholipid metabolism. Catalyzes the NAD(P)H-dependent reduction of dihydroxyacetonephosphate (DHAP or glycerone phosphate) to glycerol 1-phosphate (G1P). The G1P thus generated is used as the glycerophosphate backbone of phospholipids in the cellular membranes of Archaea. This chain is Glycerol-1-phosphate dehydrogenase [NAD(P)+], found in Haloarcula marismortui (strain ATCC 43049 / DSM 3752 / JCM 8966 / VKM B-1809) (Halobacterium marismortui).